The primary structure comprises 131 residues: Profilin-1 (131 aa).

Belongs to the profilin family. In terms of assembly, occurs in many kinds of cells as a complex with monomeric actin in a 1:1 ratio.

It is found in the cytoplasm. Its subcellular location is the cytoskeleton. Its function is as follows. Binds to actin and affects the structure of the cytoskeleton. At high concentrations, profilin prevents the polymerization of actin, whereas it enhances it at low concentrations. By binding to PIP2, it inhibits the formation of IP3 and DG. The sequence is that of Profilin-1 from Ambrosia artemisiifolia (Common ragweed).